The sequence spans 267 residues: 3-methyl-2-oxobutanoate hydroxymethyltransferase (267 aa).

Residues Asp45 and Asp84 each contribute to the Mg(2+) site. 3-methyl-2-oxobutanoate is bound by residues 45 to 46 (DS), Asp84, and Lys113. Glu115 serves as a coordination point for Mg(2+). The Proton acceptor role is filled by Glu182.

Belongs to the PanB family. Homodecamer; pentamer of dimers. Mg(2+) is required as a cofactor.

The protein resides in the cytoplasm. It carries out the reaction 3-methyl-2-oxobutanoate + (6R)-5,10-methylene-5,6,7,8-tetrahydrofolate + H2O = 2-dehydropantoate + (6S)-5,6,7,8-tetrahydrofolate. The protein operates within cofactor biosynthesis; coenzyme A biosynthesis. Catalyzes the reversible reaction in which hydroxymethyl group from 5,10-methylenetetrahydrofolate is transferred onto alpha-ketoisovalerate to form ketopantoate. In Saccharolobus islandicus (strain L.S.2.15 / Lassen #1) (Sulfolobus islandicus), this protein is 3-methyl-2-oxobutanoate hydroxymethyltransferase.